Consider the following 429-residue polypeptide: uncharacterized protein (429 aa).

A run of 10 helical transmembrane segments spans residues 26–46 (VALT…HDIF), 51–71 (TGID…VGVL), 99–119 (LVLV…VLLI), 135–155 (TSFL…TLVG), 173–193 (FMLH…AVLP), 223–243 (LLVK…AHPV), 278–298 (TLLF…TGVV), 311–331 (GNIV…SGII), 361–381 (WWAL…GASA), and 407–427 (VVTA…YFVL).

Belongs to the CitM (TC 2.A.11) transporter family.

Its subcellular location is the cell membrane. This is an uncharacterized protein from Mycobacterium tuberculosis (strain ATCC 25618 / H37Rv).